Consider the following 382-residue polypeptide: Mannitol-1-phosphate 5-dehydrogenase (382 aa).

Residue 3–14 participates in NAD(+) binding; the sequence is ALHFGAGNIGRG. Lys-269 carries the post-translational modification N6-acetyllysine.

The protein belongs to the mannitol dehydrogenase family.

The enzyme catalyses D-mannitol 1-phosphate + NAD(+) = beta-D-fructose 6-phosphate + NADH + H(+). The chain is Mannitol-1-phosphate 5-dehydrogenase from Shigella sonnei (strain Ss046).